Consider the following 445-residue polypeptide: Elongation factor 1-alpha (445 aa).

Residues 5–230 enclose the tr-type G domain; that stretch reads KVHISLVVIG…DNLEPPKRPS (226 aa). Residues 14 to 21 form a G1 region; it reads GHVDSGKS. Residue 14-21 coordinates GTP; sequence GHVDSGKS. The residue at position 55 (lysine 55) is an N6,N6-dimethyllysine. The interval 70–74 is G2; the sequence is CITID. Residue lysine 79 is modified to N6,N6,N6-trimethyllysine. The segment at 91–94 is G3; that stretch reads DAPG. Residues 91-95 and 153-156 each bind GTP; these read DAPGH and NKFD. The interval 153–156 is G4; the sequence is NKFD. N6,N6,N6-trimethyllysine is present on lysine 187. Residues 194–196 are G5; the sequence is SGW. Lysine 261 carries the post-translational modification N6-methyllysine. N6,N6,N6-trimethyllysine occurs at positions 306 and 396.

This sequence belongs to the TRAFAC class translation factor GTPase superfamily. Classic translation factor GTPase family. EF-Tu/EF-1A subfamily.

It localises to the cytoplasm. Its function is as follows. This protein promotes the GTP-dependent binding of aminoacyl-tRNA to the A-site of ribosomes during protein biosynthesis. In Euglena gracilis, this protein is Elongation factor 1-alpha (TEF).